Consider the following 231-residue polypeptide: MAKISKRMKEISAKIDAEKKYPVSEAFDILRDVSSVKFVESVDVSVALGVDPRKSDQVVRGASVLPNGTGKTVRVAVFAKGPAADAAKEAGADVVGMEDLADEVKKGNMDFDVVIASPDSMRVVGQLGQILGPKGLMPNPKVGTVTMDVAKAVRDAKAGQVRYRVDKAGIIHTTIGKVNFTSDALKQNLEQLLTDLKKAKPSVSKGIYLKKVSVSSTMGPGISVDFSDLNI.

The protein belongs to the universal ribosomal protein uL1 family. Part of the 50S ribosomal subunit.

Binds directly to 23S rRNA. The L1 stalk is quite mobile in the ribosome, and is involved in E site tRNA release. In terms of biological role, protein L1 is also a translational repressor protein, it controls the translation of the L11 operon by binding to its mRNA. The polypeptide is Large ribosomal subunit protein uL1 (Francisella philomiragia subsp. philomiragia (strain ATCC 25017 / CCUG 19701 / FSC 153 / O#319-036)).